Consider the following 335-residue polypeptide: GTPase Obg (335 aa).

Residues 1 to 158 (MFVDQITLEL…RLVELELKLI (158 aa)) form the Obg domain. The 176-residue stretch at 159 to 334 (ADIGLVGFPN…LHDLFKSKLS (176 aa)) folds into the OBG-type G domain. GTP-binding positions include 165 to 172 (GFPNAGKS), 190 to 194 (FTTLH), 215 to 218 (DIPG), 285 to 288 (NKID), and 315 to 317 (SGL). Mg(2+) contacts are provided by serine 172 and threonine 192.

This sequence belongs to the TRAFAC class OBG-HflX-like GTPase superfamily. OBG GTPase family. Monomer. Mg(2+) is required as a cofactor.

It is found in the cytoplasm. In terms of biological role, an essential GTPase which binds GTP, GDP and possibly (p)ppGpp with moderate affinity, with high nucleotide exchange rates and a fairly low GTP hydrolysis rate. Plays a role in control of the cell cycle, stress response, ribosome biogenesis and in those bacteria that undergo differentiation, in morphogenesis control. The sequence is that of GTPase Obg from Chlamydia muridarum (strain MoPn / Nigg).